Reading from the N-terminus, the 394-residue chain is Glycerol-3-phosphate dehydrogenase [NAD(+)] 2 (394 aa).

Residues 41–46 (GSGNWG), Lys-152, and Ala-185 contribute to the NAD(+) site. Lys-152 serves as a coordination point for substrate. Catalysis depends on Lys-243, which acts as the Proton acceptor. Positions 308 and 337 each coordinate NAD(+). Position 308-309 (308-309 (RN)) interacts with substrate.

It belongs to the NAD-dependent glycerol-3-phosphate dehydrogenase family.

The enzyme catalyses sn-glycerol 3-phosphate + NAD(+) = dihydroxyacetone phosphate + NADH + H(+). In Cyberlindnera jadinii (Torula yeast), this protein is Glycerol-3-phosphate dehydrogenase [NAD(+)] 2 (gpd2).